Consider the following 490-residue polypeptide: GTPase Der (490 aa).

EngA-type G domains follow at residues 1 to 165 (MRIA…QIPV) and 227 to 400 (LKVA…TIAT). GTP is bound by residues 7–14 (GRPNVGKS), 54–58 (DTGGV), 117–120 (NKAD), 233–240 (GHPNVGKS), 280–284 (DTAGL), and 345–348 (NKWD). In terms of domain architecture, KH-like spans 401–485 (TKLSTSLVNK…PFDLEYKAKP (85 aa)).

Belongs to the TRAFAC class TrmE-Era-EngA-EngB-Septin-like GTPase superfamily. EngA (Der) GTPase family. Associates with the 50S ribosomal subunit.

Functionally, GTPase that plays an essential role in the late steps of ribosome biogenesis. This Chlamydia trachomatis serovar L2b (strain UCH-1/proctitis) protein is GTPase Der.